A 64-amino-acid polypeptide reads, in one-letter code: Potassium channel toxin kappa-KTx 3.1 (64 aa).

Positions 1–26 are cleaved as a signal peptide; that stretch reads MKSTLMTASVLILVLLSIVDYASVYA. The propeptide occupies 27–36; the sequence is EFIDSEISLE. Disulfide bonds link Cys43-Cys61 and Cys47-Cys57.

Belongs to the short scorpion toxin superfamily. Potassium channel inhibitor kappa-KTx family. Kappa-KTx 3 subfamily. Expressed by the venom gland.

It localises to the secreted. Its function is as follows. Potassium channel inhibitor (Kv). The polypeptide is Potassium channel toxin kappa-KTx 3.1 (Heterometrus petersii (Asian forest scorpion)).